Here is a 301-residue protein sequence, read N- to C-terminus: D-alanine--D-alanine ligase (301 aa).

Positions 99–294 (KCILKAANIR…FSELIDMIID (196 aa)) constitute an ATP-grasp domain. 126–181 (IEGMGYPVVVKPTHGGSSVATFIIKEEKDIKNAVTEAFKWDSEVIIEKFIKGDEIT) is a binding site for ATP. Residues aspartate 248, glutamate 261, and asparagine 263 each contribute to the Mg(2+) site.

This sequence belongs to the D-alanine--D-alanine ligase family. Requires Mg(2+) as cofactor. Mn(2+) is required as a cofactor.

Its subcellular location is the cytoplasm. The enzyme catalyses 2 D-alanine + ATP = D-alanyl-D-alanine + ADP + phosphate + H(+). Its pathway is cell wall biogenesis; peptidoglycan biosynthesis. In terms of biological role, cell wall formation. This chain is D-alanine--D-alanine ligase, found in Clostridium botulinum (strain Eklund 17B / Type B).